A 210-amino-acid chain; its full sequence is NADH dehydrogenase [ubiquinone] iron-sulfur protein 8, mitochondrial (210 aa).

Residues 1-34 (MRCLTMPTLLRALAQAAHTGPPGGRTLHSSAVAA) constitute a mitochondrion transit peptide. 2 consecutive 4Fe-4S ferredoxin-type domains span residues 102 to 131 (RRYPSGEERCIACKLCEAVCPAQAITIEAE) and 141 to 170 (TRYDIDMTKCIYCGFCQEACPVDAIVEGPN). The [4Fe-4S] cluster site is built by cysteine 111, cysteine 114, cysteine 117, cysteine 121, cysteine 150, cysteine 153, cysteine 156, and cysteine 160.

It belongs to the complex I 23 kDa subunit family. In terms of assembly, core subunit of respiratory chain NADH dehydrogenase (Complex I) which is composed of 45 different subunits. This is a component of the iron-sulfur (IP) fragment of the enzyme. Interacts with RAB5IF. The cofactor is [4Fe-4S] cluster.

It is found in the mitochondrion inner membrane. The enzyme catalyses a ubiquinone + NADH + 5 H(+)(in) = a ubiquinol + NAD(+) + 4 H(+)(out). Functionally, core subunit of the mitochondrial membrane respiratory chain NADH dehydrogenase (Complex I) which catalyzes electron transfer from NADH through the respiratory chain, using ubiquinone as an electron acceptor. Essential for the catalytic activity and assembly of complex I. The sequence is that of NADH dehydrogenase [ubiquinone] iron-sulfur protein 8, mitochondrial (NDUFS8) from Macaca fascicularis (Crab-eating macaque).